The primary structure comprises 61 residues: Small ribosomal subunit protein bS21 (61 aa).

It belongs to the bacterial ribosomal protein bS21 family.

This Methylacidiphilum infernorum (isolate V4) (Methylokorus infernorum (strain V4)) protein is Small ribosomal subunit protein bS21.